Reading from the N-terminus, the 89-residue chain is UPF0297 protein SEQ_2150 (89 aa).

This sequence belongs to the UPF0297 family.

This Streptococcus equi subsp. equi (strain 4047) protein is UPF0297 protein SEQ_2150.